Here is a 531-residue protein sequence, read N- to C-terminus: MGKKVAIIGAGISGLASIRSCLEEGLEPTCFEMSDDIGGLWKFSDHAEEGRASIYQSVFTNSSKEMMCFPDFPFPDDFPNFMHNSKLQEYITTFAREKNLLKYIQFKTLVSSIKKHPDFSVTGQWYVSTERNGKKETAVFDAVMICSGHHVYPNLPKDSFPGLKHFKGKSFHSREYKEPGIFKGKRVLVIGLGNSGCDIATELSHTAEQVVISSRSGSWVMSRVWDDGYPWDMLYVTRFQTFLKNNLPTAISDWWYVKQMNAKFKHENYSLMPLNGTLRKEPVFNDDLPARILCGTVSIKPNVKEFTETSAIFEDGTVFEAIDSVIFATGYGYAYPFLDDSIIKSENNKVTLFKGIFPPQLEKPTMAVIGLVQSLGAAIPTTDLQARWAAQVIKGTCTLPPVKDMMNDIHEKMGTKLKWFGKSETIQTDYINYMDELASFIGVKLNIPWLFLTDPRLALEVFFGPCSPYQFRLVGPGKWPGARQAILTQWDRSLKPMKTRAVGHLQKPALFSPWLKLLAIAVLLIAAVLVF.

Residues 9-13 (GAGIS), glutamate 32, 40-41 (LW), and 61-62 (NS) each bind FAD. Residues 60–61 (TN) and 195–198 (SGCD) contribute to the NADP(+) site. Residues 511-531 (FSPWLKLLAIAVLLIAAVLVF) traverse the membrane as a helical segment.

Belongs to the FMO family. Requires FAD as cofactor. As to expression, liver.

The protein resides in the microsome membrane. It is found in the endoplasmic reticulum membrane. It catalyses the reaction trimethylamine + NADPH + O2 = trimethylamine N-oxide + NADP(+) + H2O. The catalysed reaction is N,N-dimethylaniline + NADPH + O2 + H(+) = N,N-dimethylaniline N-oxide + NADP(+) + H2O. The enzyme catalyses hypotaurine + NADPH + O2 + H(+) = taurine + NADP(+) + H2O. It carries out the reaction (S)-nicotine + NADPH + O2 = trans-(S)-nicotine N(1')-oxide + NADP(+) + H2O. It catalyses the reaction albendazole + NADPH + O2 + H(+) = albendazole S-oxide + NADP(+) + H2O. In terms of biological role, essential hepatic enzyme that catalyzes the oxygenation of a wide variety of nitrogen- and sulfur-containing compounds including drugs as well as dietary compounds. Plays an important role in the metabolism of trimethylamine (TMA), via the production of trimethylamine N-oxide (TMAO) metabolite. TMA is generated by the action of gut microbiota using dietary precursors such as choline, choline containing compounds, betaine or L-carnitine. By regulating TMAO concentration, FMO3 directly impacts both platelet responsiveness and rate of thrombus formation. The chain is Flavin-containing monooxygenase 3 (FMO3) from Oryctolagus cuniculus (Rabbit).